The following is a 486-amino-acid chain: Cardiolipin synthase A (486 aa).

The next 2 membrane-spanning stretches (helical) occupy residues 3–23 (TFYT…IAGV) and 38–58 (MAWL…YLSV). PLD phosphodiesterase domains are found at residues 219-246 (MDLR…VDPR) and 399-426 (EGGL…DMRS). Active-site residues include histidine 224, lysine 226, aspartate 231, histidine 404, lysine 406, and aspartate 411.

Belongs to the phospholipase D family. Cardiolipin synthase subfamily. ClsA sub-subfamily.

It is found in the cell inner membrane. The catalysed reaction is 2 a 1,2-diacyl-sn-glycero-3-phospho-(1'-sn-glycerol) = a cardiolipin + glycerol. In terms of biological role, catalyzes the reversible phosphatidyl group transfer from one phosphatidylglycerol molecule to another to form cardiolipin (CL) (diphosphatidylglycerol) and glycerol. The chain is Cardiolipin synthase A from Salmonella choleraesuis (strain SC-B67).